A 439-amino-acid polypeptide reads, in one-letter code: Maintenance of mitochondrial morphology protein 1 (439 aa).

The Lumenal portion of the chain corresponds to 1–76; the sequence is MSQDLIETTA…NGNTWSFTQG (76 aa). Residues 77–97 traverse the membrane as a helical segment; the sequence is LVIGQVSVIFIIIVFVKFFVF. Over 98 to 439 the chain is Cytoplasmic; the sequence is ADSSSHIPTK…TPGEYVNSNI (342 aa). 3 disordered regions span residues 125-145, 309-336, and 405-425; these read KHSN…SLDS, MNGY…DGGT, and REPV…GTSA. Residues 165-395 form the SMP-LTD domain; sequence ASESLDWFNV…EPRFQVVRLP (231 aa). Low complexity-rich tracts occupy residues 315–326 and 410–424; these read ENANGDGASSSN and KKTT…NGTS.

It belongs to the MMM1 family. As to quaternary structure, homodimer. Component of the ER-mitochondria encounter structure (ERMES) or MDM complex, composed of MMM1, MDM10, MDM12 and MDM34. An MMM1 homodimer associates with one molecule of MDM12 on each side in a pairwise head-to-tail manner, and the SMP-LTD domains of MMM1 and MDM12 generate a continuous hydrophobic tunnel for phospholipid trafficking.

It is found in the endoplasmic reticulum membrane. Component of the ERMES/MDM complex, which serves as a molecular tether to connect the endoplasmic reticulum (ER) and mitochondria. Components of this complex are involved in the control of mitochondrial shape and protein biogenesis, and function in nonvesicular lipid trafficking between the ER and mitochondria. The MDM12-MMM1 subcomplex functions in the major beta-barrel assembly pathway that is responsible for biogenesis of all outer membrane beta-barrel proteins, and acts in a late step after the SAM complex. The MDM10-MDM12-MMM1 subcomplex further acts in the TOM40-specific pathway after the action of the MDM12-MMM1 complex. Essential for establishing and maintaining the structure of mitochondria and maintenance of mtDNA nucleoids. This is Maintenance of mitochondrial morphology protein 1 from Candida albicans (strain WO-1) (Yeast).